Reading from the N-terminus, the 517-residue chain is Ribonuclease Y (517 aa).

Residues 1–21 form a helical membrane-spanning segment; the sequence is MIESLIALIAAIVGLGIGYLV. In terms of domain architecture, KH spans 207–273; the sequence is LINVINIKND…TKVIELLVED (67 aa). The HD domain occupies 333-426; sequence ALAHSLEVAH…VCAADTLSAA (94 aa).

This sequence belongs to the RNase Y family.

Its subcellular location is the cell membrane. In terms of biological role, endoribonuclease that initiates mRNA decay. This Campylobacter jejuni subsp. doylei (strain ATCC BAA-1458 / RM4099 / 269.97) protein is Ribonuclease Y.